A 428-amino-acid chain; its full sequence is Kynureninase (428 aa).

Pyridoxal 5'-phosphate is bound by residues Thr104, Thr105, 132–135 (FPSD), Asp213, His216, and Tyr238. Lys239 is modified (N6-(pyridoxal phosphate)lysine). 2 residues coordinate pyridoxal 5'-phosphate: Trp267 and Thr295.

This sequence belongs to the kynureninase family. As to quaternary structure, homodimer. Requires pyridoxal 5'-phosphate as cofactor.

It carries out the reaction L-kynurenine + H2O = anthranilate + L-alanine + H(+). The enzyme catalyses 3-hydroxy-L-kynurenine + H2O = 3-hydroxyanthranilate + L-alanine + H(+). It participates in amino-acid degradation; L-kynurenine degradation; L-alanine and anthranilate from L-kynurenine: step 1/1. It functions in the pathway cofactor biosynthesis; NAD(+) biosynthesis; quinolinate from L-kynurenine: step 2/3. Its function is as follows. Catalyzes the cleavage of L-kynurenine (L-Kyn) and L-3-hydroxykynurenine (L-3OHKyn) into anthranilic acid (AA) and 3-hydroxyanthranilic acid (3-OHAA), respectively. This Bacillus mycoides (strain KBAB4) (Bacillus weihenstephanensis) protein is Kynureninase.